A 283-amino-acid chain; its full sequence is 2-dehydro-3-deoxyphosphooctonate aldolase (283 aa).

The protein belongs to the KdsA family.

Its subcellular location is the cytoplasm. The enzyme catalyses D-arabinose 5-phosphate + phosphoenolpyruvate + H2O = 3-deoxy-alpha-D-manno-2-octulosonate-8-phosphate + phosphate. The protein operates within carbohydrate biosynthesis; 3-deoxy-D-manno-octulosonate biosynthesis; 3-deoxy-D-manno-octulosonate from D-ribulose 5-phosphate: step 2/3. It participates in bacterial outer membrane biogenesis; lipopolysaccharide biosynthesis. In Laribacter hongkongensis (strain HLHK9), this protein is 2-dehydro-3-deoxyphosphooctonate aldolase.